The following is a 354-amino-acid chain: 3-dehydroquinate synthase (354 aa).

NAD(+) contacts are provided by residues 100–104, 124–125, lysine 136, lysine 145, and 163–166; these read GATGD, TT, and FLKT. Positions 178, 242, and 256 each coordinate Zn(2+).

It belongs to the sugar phosphate cyclases superfamily. Dehydroquinate synthase family. It depends on NAD(+) as a cofactor. Co(2+) is required as a cofactor. Requires Zn(2+) as cofactor.

It localises to the cytoplasm. It carries out the reaction 7-phospho-2-dehydro-3-deoxy-D-arabino-heptonate = 3-dehydroquinate + phosphate. It participates in metabolic intermediate biosynthesis; chorismate biosynthesis; chorismate from D-erythrose 4-phosphate and phosphoenolpyruvate: step 2/7. Its function is as follows. Catalyzes the conversion of 3-deoxy-D-arabino-heptulosonate 7-phosphate (DAHP) to dehydroquinate (DHQ). The chain is 3-dehydroquinate synthase from Staphylococcus aureus (strain MSSA476).